The chain runs to 337 residues: Schlafen family member 1 (337 aa).

The tract at residues 147 to 166 (AGGRSPSARPSDRPGDDTQE) is disordered. The segment covering 156–166 (PSDRPGDDTQE) has biased composition (basic and acidic residues).

This sequence belongs to the Schlafen family. Interacts with DNAJB6; promoting nuclear translocation and ability to promote cell-cycle arrest. In terms of tissue distribution, mainly expressed in the thymus, lymph node and spleen. Specifically expressed in T-lineage cells, but not in B-cells. Strongly up-regulated during the differentiation from CD4(+)CD8(+) double-positive (DP) to CD4(+) or CD8(+) single-positive (SP) thymocytes. Highly expressed in quiescent single-positive thymocytes and T-cells. The expression substantially decreases after TCR (T-cell receptor)-mediated activation.

Its subcellular location is the cytoplasm. It localises to the nucleus. In terms of biological role, protein expressed in resting T-cells, which is required for maintaining T-cells in the quiescent state. Acts by promoting cell-cycle arrest of T-cells through inhibiting the expression of cyclin-D1 (CCND1). This chain is Schlafen family member 1, found in Mus musculus (Mouse).